The following is a 692-amino-acid chain: Elongation factor G (692 aa).

The 275-residue stretch at 8 to 282 (ENTRNIGIMA…GVVDYLPSPV (275 aa)) folds into the tr-type G domain. GTP is bound by residues 17 to 24 (AHIDAGKT), 81 to 85 (DTPGH), and 135 to 138 (NKMD).

It belongs to the TRAFAC class translation factor GTPase superfamily. Classic translation factor GTPase family. EF-G/EF-2 subfamily.

It localises to the cytoplasm. Functionally, catalyzes the GTP-dependent ribosomal translocation step during translation elongation. During this step, the ribosome changes from the pre-translocational (PRE) to the post-translocational (POST) state as the newly formed A-site-bound peptidyl-tRNA and P-site-bound deacylated tRNA move to the P and E sites, respectively. Catalyzes the coordinated movement of the two tRNA molecules, the mRNA and conformational changes in the ribosome. This is Elongation factor G from Geobacillus sp. (strain WCH70).